The following is a 588-amino-acid chain: Probable G-protein coupled receptor 162 (588 aa).

Residues Met-1–Ala-17 are Extracellular-facing. Residues Leu-18 to Ile-38 traverse the membrane as a helical segment. At Ser-39–Glu-49 the chain is on the cytoplasmic side. A helical membrane pass occupies residues Leu-50–Phe-70. The Extracellular portion of the chain corresponds to Ala-71 to Lys-91. N-linked (GlcNAc...) asparagine glycosylation occurs at Asn-86. Residues Val-92 to Ser-112 traverse the membrane as a helical segment. The Cytoplasmic portion of the chain corresponds to Tyr-113–Gln-133. The helical transmembrane segment at Ala-134 to Ile-154 threads the bilayer. At Gly-155–Lys-174 the chain is on the extracellular side. The chain crosses the membrane as a helical span at residues Ile-175–Leu-195. Topologically, residues Val-196–Ala-275 are cytoplasmic. A helical transmembrane segment spans residues Ile-276–Leu-296. Topologically, residues Lys-297–Pro-303 are extracellular. The chain crosses the membrane as a helical span at residues Trp-304 to Ile-324. Residues Trp-325 to Leu-588 lie on the Cytoplasmic side of the membrane. 2 positions are modified to phosphoserine: Ser-413 and Ser-435. 2 disordered regions span residues Gln-445–Gly-474 and Glu-511–Leu-550. Positions Pro-530–Arg-546 are enriched in low complexity.

The protein belongs to the G-protein coupled receptor 1 family.

The protein localises to the cell membrane. Functionally, orphan receptor. This chain is Probable G-protein coupled receptor 162 (GPR162), found in Homo sapiens (Human).